A 584-amino-acid chain; its full sequence is Protein DENND6A (584 aa).

The tract at residues 1-23 is disordered; the sequence is MALWERGAGGAAEAGEDATEEPE. The uDENN domain maps to 39–218; it reads HCVCVVGFDL…KLRIPTYRDK (180 aa). The 126-residue stretch at 244–369 folds into the cDENN domain; that stretch reads EVDLFRCFCP…VKVKKLKNLK (126 aa). One can recognise a dDENN domain in the interval 371–504; sequence LDSKPGVYTS…RSRQKEMTQN (134 aa).

Belongs to the DENND6 family.

The protein localises to the recycling endosome. Its subcellular location is the cytoplasm. In terms of biological role, guanine nucleotide exchange factor (GEF) for RAB14. The sequence is that of Protein DENND6A (DENND6A) from Gallus gallus (Chicken).